A 475-amino-acid chain; its full sequence is Ribulose bisphosphate carboxylase large chain (475 aa).

Positions 1–2 are excised as a propeptide; it reads MS. Position 3 is an N-acetylproline (proline 3). The residue at position 14 (lysine 14) is an N6,N6,N6-trimethyllysine. Residues asparagine 123 and threonine 173 each contribute to the substrate site. Residue lysine 175 is the Proton acceptor of the active site. Substrate is bound at residue lysine 177. Mg(2+)-binding residues include lysine 201, aspartate 203, and glutamate 204. Residue lysine 201 is modified to N6-carboxylysine. The active-site Proton acceptor is histidine 294. Residues arginine 295, histidine 327, and serine 379 each contribute to the substrate site.

Belongs to the RuBisCO large chain family. Type I subfamily. In terms of assembly, heterohexadecamer of 8 large chains and 8 small chains. It depends on Mg(2+) as a cofactor.

It localises to the plastid. The protein resides in the chloroplast. The enzyme catalyses 2 (2R)-3-phosphoglycerate + 2 H(+) = D-ribulose 1,5-bisphosphate + CO2 + H2O. It catalyses the reaction D-ribulose 1,5-bisphosphate + O2 = 2-phosphoglycolate + (2R)-3-phosphoglycerate + 2 H(+). Its function is as follows. RuBisCO catalyzes two reactions: the carboxylation of D-ribulose 1,5-bisphosphate, the primary event in carbon dioxide fixation, as well as the oxidative fragmentation of the pentose substrate in the photorespiration process. Both reactions occur simultaneously and in competition at the same active site. The chain is Ribulose bisphosphate carboxylase large chain from Chlorella vulgaris (Green alga).